The sequence spans 163 residues: CASP-like protein 1C2 (163 aa).

At 1–6 (MAKSNK) the chain is on the cytoplasmic side. A helical transmembrane segment spans residues 7-27 (IFTNTLRLLALAATVVAIVFM). Over 28–52 (VTSHDSAQVLNLTFTAKYSNTPAFK) the chain is Extracellular. N38 is a glycosylation site (N-linked (GlcNAc...) asparagine). Residues 53-73 (FLVIGEAIAGGYTVISILLSF) form a helical membrane-spanning segment. The Cytoplasmic portion of the chain corresponds to 74 to 79 (KGLFWR). A helical membrane pass occupies residues 80–100 (LIVILDMVTTVLLTSSISAAL). Residues 101–128 (AIAQVGKKGNTHAGWLPICGQVPDFCDY) are Extracellular-facing. A helical membrane pass occupies residues 129–149 (VTIALIAGFAAAIIYFVLLLC). The Cytoplasmic portion of the chain corresponds to 150–163 (SLYVVLSPIFVATP).

Belongs to the Casparian strip membrane proteins (CASP) family. Homodimer and heterodimers.

Its subcellular location is the cell membrane. This Populus trichocarpa (Western balsam poplar) protein is CASP-like protein 1C2.